The sequence spans 254 residues: Transmembrane protein 70, mitochondrial (254 aa).

Residues 1–78 (MLFLALGGPW…PVCWERGVRC (78 aa)) constitute a mitochondrion transit peptide. At 79-112 (SHTQLDKSEDGRLIYTGNLARTVFGVKCFSYSTS) the chain is on the mitochondrial matrix side. A helical transmembrane segment spans residues 113–133 (LISLAFLPYIFAQNNVIFGSL). At 134–136 (PLQ) the chain is on the mitochondrial intermembrane side. The chain crosses the membrane as a helical span at residues 137–157 (ILFYGTIGSFTVITPALLHFL). The Mitochondrial matrix portion of the chain corresponds to 158–254 (TKGYVIRLYH…SEKKQLKEEK (97 aa)).

This sequence belongs to the TMEM70 family. As to quaternary structure, homooligomer. Interacts (homooligomer form) with ATP5MC1; this interaction facilitates the oligomer formation of subunit c/ATP5MC1 (c-ring) and the c-ring membrane insertion and also protects ATP5MC1 against intramitochondrial proteolysis. Interacts with the core subunits TMEM126B, NDUFAF1, ECSIT and ACAD9 of the MCIA complex. Interacts with ATP5MC3, TMEM242 and TIMMDC1.

Its subcellular location is the mitochondrion inner membrane. Functionally, scaffold protein that participates in the c-ring assembly of mitochondrial ATP synthase (F(1)F(0) ATP synthase or complex V) by facilitating the membrane insertion and oligomer formation of the subunit c/ATP5MC1 through its interaction. Therefore, participates in the early stage of mitochondrial ATP synthase biogenesis and also protects subunit c/ATP5MC1 against intramitochondrial proteolysis. In addition, binds the mitochondrial proton-transporting ATP synthase complexes I and may play a role in the stability of its membrane-bound subassemblies. The chain is Transmembrane protein 70, mitochondrial from Bos taurus (Bovine).